The sequence spans 148 residues: Large ribosomal subunit protein bL9 (148 aa).

This sequence belongs to the bacterial ribosomal protein bL9 family.

Functionally, binds to the 23S rRNA. The protein is Large ribosomal subunit protein bL9 of Caldicellulosiruptor saccharolyticus (strain ATCC 43494 / DSM 8903 / Tp8T 6331).